The following is a 227-amino-acid chain: ATP synthase F(0) complex subunit a (227 aa).

Transmembrane regions (helical) follow at residues L14 to P34, W69 to L89, Q98 to L118, E132 to I152, F180 to L200, and L202 to Y222.

The protein belongs to the ATPase A chain family. Component of the ATP synthase complex composed at least of ATP5F1A/subunit alpha, ATP5F1B/subunit beta, ATP5MC1/subunit c (homooctomer), MT-ATP6/subunit a, MT-ATP8/subunit 8, ATP5ME/subunit e, ATP5MF/subunit f, ATP5MG/subunit g, ATP5MK/subunit k, ATP5MJ/subunit j, ATP5F1C/subunit gamma, ATP5F1D/subunit delta, ATP5F1E/subunit epsilon, ATP5PF/subunit F6, ATP5PB/subunit b, ATP5PD/subunit d, ATP5PO/subunit OSCP. ATP synthase complex consists of a soluble F(1) head domain (subunits alpha(3) and beta(3)) - the catalytic core - and a membrane F(0) domain - the membrane proton channel (subunits c, a, 8, e, f, g, k and j). These two domains are linked by a central stalk (subunits gamma, delta, and epsilon) rotating inside the F1 region and a stationary peripheral stalk (subunits F6, b, d, and OSCP). Interacts with DNAJC30; interaction is direct.

The protein resides in the mitochondrion inner membrane. It catalyses the reaction H(+)(in) = H(+)(out). Subunit a, of the mitochondrial membrane ATP synthase complex (F(1)F(0) ATP synthase or Complex V) that produces ATP from ADP in the presence of a proton gradient across the membrane which is generated by electron transport complexes of the respiratory chain. ATP synthase complex consist of a soluble F(1) head domain - the catalytic core - and a membrane F(1) domain - the membrane proton channel. These two domains are linked by a central stalk rotating inside the F(1) region and a stationary peripheral stalk. During catalysis, ATP synthesis in the catalytic domain of F(1) is coupled via a rotary mechanism of the central stalk subunits to proton translocation. With the subunit c (ATP5MC1), forms the proton-conducting channel in the F(0) domain, that contains two crucial half-channels (inlet and outlet) that facilitate proton movement from the mitochondrial intermembrane space (IMS) into the matrix. Protons are taken up via the inlet half-channel and released through the outlet half-channel, following a Grotthuss mechanism. This is ATP synthase F(0) complex subunit a from Tetraodon nigroviridis (Spotted green pufferfish).